Consider the following 568-residue polypeptide: MNLFKEKKIKKIIYINWRFVTLCSIVFLFLVILTLRIIFLQIINSKKLAYEGDRRTLRIQSVINRRGIINDRLGYPLAVAVPVNAVFIDPTMITNKNDIKNNIRWKALSEILSIPLNKLIFFINSDKNIKFIYLARQINPEIGDYIKALKLPGVFLIEESKRYYPTGAIAAQLIGINNIDGEGIEGIEKSFNSYLTGTPGKRKIRKDNQGQIIENESLINKSNSNNLILSIDKKLQTIVYQKLNNAVNENQADFGIAILINIETGEILAMANSPSYNPNNMQYMINKNLRNKAITDIFEPGSTVKPIVIMEALKRGIIKKNSIINTKPYFIKKHKITDVAYHEKLNITGILKKSSNVGVSKIALSMNTSELINSYIKFGLGQPTNLGLIGEQKGFLPKKKKLSDLEKATFSFGYGLMITPLQLARLYTIIGSYGIYRPLSIIKIDHPLYEKRIFPKRYVKNVIHMMETVAHPGEGGSQAAIKGYRVAIKTGTAKKVGIHGYYIKKYIAYTAGIAPASNPKFSLTIIIDNPKGEKYYGGAVSAPVFSKIMKLVLKEMKIKPDNLKNKLS.

Residues 19–39 form a helical membrane-spanning segment; sequence FVTLCSIVFLFLVILTLRIIF. The active-site Acyl-ester intermediate is serine 302.

The protein belongs to the transpeptidase family. FtsI subfamily.

Its subcellular location is the cell inner membrane. The enzyme catalyses Preferential cleavage: (Ac)2-L-Lys-D-Ala-|-D-Ala. Also transpeptidation of peptidyl-alanyl moieties that are N-acyl substituents of D-alanine.. It participates in cell wall biogenesis; peptidoglycan biosynthesis. Catalyzes cross-linking of the peptidoglycan cell wall at the division septum. This is Peptidoglycan D,D-transpeptidase FtsI from Buchnera aphidicola subsp. Schizaphis graminum (strain Sg).